Here is a 310-residue protein sequence, read N- to C-terminus: Uridine phosphorylase 1 (310 aa).

Residues Gly60, Arg94, and Arg138–Thr141 contribute to the phosphate site. Residues Ser142–Gly143 and Gln217–Arg219 each bind uridine.

It belongs to the PNP/UDP phosphorylase family. As to quaternary structure, homodimer.

It carries out the reaction uridine + phosphate = alpha-D-ribose 1-phosphate + uracil. It catalyses the reaction 2'-deoxyuridine + phosphate = 2-deoxy-alpha-D-ribose 1-phosphate + uracil. It participates in pyrimidine metabolism; UMP biosynthesis via salvage pathway; uracil from uridine (phosphorylase route): step 1/1. In terms of biological role, catalyzes the reversible phosphorylytic cleavage of uridine to uracil and ribose-1-phosphate which can then be utilized as carbon and energy sources or in the rescue of pyrimidine bases for nucleotide synthesis. Shows broad substrate specificity and can also accept deoxyuridine and other analogous compounds. This is Uridine phosphorylase 1 from Homo sapiens (Human).